Reading from the N-terminus, the 152-residue chain is UPF0225 protein YchJ (152 aa).

This sequence belongs to the UPF0225 family.

The sequence is that of UPF0225 protein YchJ from Shigella flexneri serotype 5b (strain 8401).